A 670-amino-acid polypeptide reads, in one-letter code: Methionine--tRNA ligase (670 aa).

Positions 14-24 match the 'HIGH' region motif; sequence PYANGHLHLGH. C145, C148, C158, and C161 together coordinate Zn(2+). The short motif at 330 to 334 is the 'KMSKS' region element; it reads KMSKS. K333 is an ATP binding site. The 101-residue stretch at 570-670 folds into the tRNA-binding domain; the sequence is DFAKVDLRIA…AGALPGMKVK (101 aa).

Belongs to the class-I aminoacyl-tRNA synthetase family. MetG type 1 subfamily. As to quaternary structure, homodimer. It depends on Zn(2+) as a cofactor.

Its subcellular location is the cytoplasm. The catalysed reaction is tRNA(Met) + L-methionine + ATP = L-methionyl-tRNA(Met) + AMP + diphosphate. Its function is as follows. Is required not only for elongation of protein synthesis but also for the initiation of all mRNA translation through initiator tRNA(fMet) aminoacylation. The sequence is that of Methionine--tRNA ligase from Legionella pneumophila subsp. pneumophila (strain Philadelphia 1 / ATCC 33152 / DSM 7513).